The sequence spans 1222 residues: DNA-directed RNA polymerase II subunit RPB2 (1222 aa).

Residue Asp-835 participates in Mg(2+) binding. 4 residues coordinate Zn(2+): Cys-1161, Cys-1164, Cys-1180, and Cys-1183. The C4-type zinc-finger motif lies at 1161-1183 (CGICGLMTVVAKLKHNQFECRGC).

Belongs to the RNA polymerase beta chain family. As to quaternary structure, component of the RNA polymerase II (Pol II) complex consisting of 12 subunits.

It localises to the nucleus. It catalyses the reaction RNA(n) + a ribonucleoside 5'-triphosphate = RNA(n+1) + diphosphate. Its function is as follows. DNA-dependent RNA polymerase catalyzes the transcription of DNA into RNA using the four ribonucleoside triphosphates as substrates. Second largest component of RNA polymerase II which synthesizes mRNA precursors and many functional non-coding RNAs. Proposed to contribute to the polymerase catalytic activity and forms the polymerase active center together with the largest subunit. Pol II is the central component of the basal RNA polymerase II transcription machinery. It is composed of mobile elements that move relative to each other. RPB2 is part of the core element with the central large cleft, the clamp element that moves to open and close the cleft and the jaws that are thought to grab the incoming DNA template. The polypeptide is DNA-directed RNA polymerase II subunit RPB2 (RPB2) (Eremothecium gossypii (strain ATCC 10895 / CBS 109.51 / FGSC 9923 / NRRL Y-1056) (Yeast)).